Reading from the N-terminus, the 233-residue chain is TATA-box-binding protein 1 (233 aa).

2 consecutive repeat copies span residues 58-134 (LQNI…ARIV) and 148-225 (IQNI…YPVL).

The protein belongs to the TBP family. In terms of assembly, belongs to the TFIID complex together with the TBP-associated factors (TAFs). Binds DNA as monomer.

The protein localises to the nucleus. Its function is as follows. General transcription factor that functions at the core of the DNA-binding multiprotein factor TFIID. Binding of TFIID to the TATA box is the initial transcriptional step of the pre-initiation complex (PIC), playing a role in the activation of eukaryotic genes transcribed by RNA polymerase II. The protein is TATA-box-binding protein 1 (TBP1) of Triticum aestivum (Wheat).